We begin with the raw amino-acid sequence, 178 residues long: Small ribosomal subunit protein uS7c (178 aa).

The span at 137 to 146 (QKKEEIEKSK) shows a compositional bias: basic and acidic residues. Positions 137–178 (QKKEEIEKSKSPVNNNKKFISKNKKSKNKKQKKRLKRKKNIY) are disordered. A compositionally biased stretch (basic residues) spans 155–178 (FISKNKKSKNKKQKKRLKRKKNIY).

Belongs to the universal ribosomal protein uS7 family. In terms of assembly, part of the 30S ribosomal subunit.

The protein localises to the plastid. Its function is as follows. One of the primary rRNA binding proteins, it binds directly to 16S rRNA where it nucleates assembly of the head domain of the 30S subunit. The protein is Small ribosomal subunit protein uS7c (rps7) of Euglena longa (Euglenophycean alga).